The following is a 338-amino-acid chain: Ketol-acid reductoisomerase (NADP(+)) (338 aa).

In terms of domain architecture, KARI N-terminal Rossmann spans 1 to 181 (MKVFYDKDCD…GGGKAGIIET (181 aa)). NADP(+) is bound by residues 24-27 (YGSQ), arginine 47, and serine 52. Residue histidine 107 is part of the active site. Glycine 133 provides a ligand contact to NADP(+). A KARI C-terminal knotted domain is found at 182 to 327 (NFKEETETDL…AQLRAMMPWI (146 aa)). Mg(2+) contacts are provided by aspartate 190, glutamate 194, glutamate 226, and glutamate 230. A substrate-binding site is contributed by serine 251.

It belongs to the ketol-acid reductoisomerase family. Requires Mg(2+) as cofactor.

The catalysed reaction is (2R)-2,3-dihydroxy-3-methylbutanoate + NADP(+) = (2S)-2-acetolactate + NADPH + H(+). It carries out the reaction (2R,3R)-2,3-dihydroxy-3-methylpentanoate + NADP(+) = (S)-2-ethyl-2-hydroxy-3-oxobutanoate + NADPH + H(+). Its pathway is amino-acid biosynthesis; L-isoleucine biosynthesis; L-isoleucine from 2-oxobutanoate: step 2/4. It functions in the pathway amino-acid biosynthesis; L-valine biosynthesis; L-valine from pyruvate: step 2/4. In terms of biological role, involved in the biosynthesis of branched-chain amino acids (BCAA). Catalyzes an alkyl-migration followed by a ketol-acid reduction of (S)-2-acetolactate (S2AL) to yield (R)-2,3-dihydroxy-isovalerate. In the isomerase reaction, S2AL is rearranged via a Mg-dependent methyl migration to produce 3-hydroxy-3-methyl-2-ketobutyrate (HMKB). In the reductase reaction, this 2-ketoacid undergoes a metal-dependent reduction by NADPH to yield (R)-2,3-dihydroxy-isovalerate. This chain is Ketol-acid reductoisomerase (NADP(+)), found in Paracidovorax citrulli (strain AAC00-1) (Acidovorax citrulli).